The following is a 314-amino-acid chain: MSILRDSGRHYEWQYLDLMRRIWEHGDERVDRTGVGTRSVFGAELRFDLSDGRMPLLTTKRVYWKTATREFLWFLTGNTNIRPLCAQGVEIWTDWPLDRYRKETGDDISRKDFSARIVADEAFALRWGDLGPVYGKQWVDWPVFEPVGDGLFRRREAGVNQVADVVDSLRHNPGSRRHIIEGWNVAEIDRMALPPCHKTYQFHVSGNRLNGLLYQRSCDVALGLPFNLWGAALLVRLLAQQCDLQPGELVWMGGDTHLYLNHADLVEAQLSREPEGDPRLAILRRPDSIFGYRIEDFEVTGYAPQGHLSAPVAV.

DUMP contacts are provided by residues arginine 32 and 176 to 177 (RR). Catalysis depends on cysteine 196, which acts as the Nucleophile. Residues 216 to 219 (RSCD), asparagine 227, and 257 to 259 (HLY) contribute to the dUMP site. Residue aspartate 219 coordinates (6R)-5,10-methylene-5,6,7,8-tetrahydrofolate. Residue alanine 313 participates in (6R)-5,10-methylene-5,6,7,8-tetrahydrofolate binding.

The protein belongs to the thymidylate synthase family. Bacterial-type ThyA subfamily. As to quaternary structure, homodimer.

It is found in the cytoplasm. The catalysed reaction is dUMP + (6R)-5,10-methylene-5,6,7,8-tetrahydrofolate = 7,8-dihydrofolate + dTMP. It participates in pyrimidine metabolism; dTTP biosynthesis. In terms of biological role, catalyzes the reductive methylation of 2'-deoxyuridine-5'-monophosphate (dUMP) to 2'-deoxythymidine-5'-monophosphate (dTMP) while utilizing 5,10-methylenetetrahydrofolate (mTHF) as the methyl donor and reductant in the reaction, yielding dihydrofolate (DHF) as a by-product. This enzymatic reaction provides an intracellular de novo source of dTMP, an essential precursor for DNA biosynthesis. This is Thymidylate synthase from Novosphingobium aromaticivorans (strain ATCC 700278 / DSM 12444 / CCUG 56034 / CIP 105152 / NBRC 16084 / F199).